The chain runs to 381 residues: MGPIGTEADENQTVEEMKVEQYGPQTTPRGELVPDPEPELIDSTKLIEVQVVLILAYCSIILLGVIGNSLVIHVVIKFKSMRTVTNFFIANLAVADLVVNTLCLPFTLTYTLMGEWKMGPVLCHLVPYAQGLAVQVSTITLTVIALDRHRCIVYHLESKISKRISFLIIGLAWGISALLASPLAIFREYSLIEIIPDFEIVACTEKWPGEEKSIYGTVYSLSSLLILYVLPLGIISFSYTRIWSKLKSHVSPGAANDHYHQRRQKTTKMLVCVVVVFAVSWLPLHAFQLAVDIDSHVLDLKEYKLIFTVFHIIAMCSTFANPLLYGWMNSNYRKAFLSAFRCEQRLDAIHSEVSVTFKAKKNLEVRKNSGPNDSFTEATNV.

The tract at residues 1–35 (MGPIGTEADENQTVEEMKVEQYGPQTTPRGELVPD) is disordered. The Extracellular segment spans residues 1–51 (MGPIGTEADENQTVEEMKVEQYGPQTTPRGELVPDPEPELIDSTKLIEVQV). Residue N11 is glycosylated (N-linked (GlcNAc...) asparagine). A helical membrane pass occupies residues 52–72 (VLILAYCSIILLGVIGNSLVI). At 73–86 (HVVIKFKSMRTVTN) the chain is on the cytoplasmic side. The chain crosses the membrane as a helical span at residues 87–107 (FFIANLAVADLVVNTLCLPFT). The Extracellular portion of the chain corresponds to 108-124 (LTYTLMGEWKMGPVLCH). C123 and C203 form a disulfide bridge. A helical transmembrane segment spans residues 125–145 (LVPYAQGLAVQVSTITLTVIA). At 146–165 (LDRHRCIVYHLESKISKRIS) the chain is on the cytoplasmic side. A helical transmembrane segment spans residues 166–186 (FLIIGLAWGISALLASPLAIF). Residues 187–216 (REYSLIEIIPDFEIVACTEKWPGEEKSIYG) are Extracellular-facing. Residues 217–237 (TVYSLSSLLILYVLPLGIISF) form a helical membrane-spanning segment. The Cytoplasmic portion of the chain corresponds to 238-268 (SYTRIWSKLKSHVSPGAANDHYHQRRQKTTK). Residues 269 to 289 (MLVCVVVVFAVSWLPLHAFQL) traverse the membrane as a helical segment. Topologically, residues 290–304 (AVDIDSHVLDLKEYK) are extracellular. A helical transmembrane segment spans residues 305–325 (LIFTVFHIIAMCSTFANPLLY). Residues 326-381 (GWMNSNYRKAFLSAFRCEQRLDAIHSEVSVTFKAKKNLEVRKNSGPNDSFTEATNV) are Cytoplasmic-facing. The S-palmitoyl cysteine moiety is linked to residue C342.

Belongs to the G-protein coupled receptor 1 family.

The protein resides in the cell membrane. Functionally, receptor for neuropeptide Y and peptide YY. This Macaca mulatta (Rhesus macaque) protein is Neuropeptide Y receptor type 2 (NPY2R).